A 1218-amino-acid chain; its full sequence is Coatomer subunit alpha-1 (1218 aa).

WD repeat units lie at residues 7–48 (TKSN…DRFD), 49–88 (EHDGPVRGVHFHATQPLFVSGGDDYKIKVWNYKTHRCLFT), 91–132 (GHLD…AVLT), 133–172 (GHNHYVMCASFHPKEDLVVSASLDQTVRVWDIGALRKKTV), 202–241 (GHDRGVNWASFHPTLPLIVSGADDRQVKLWRMNDTKAWEV), 246–285 (GHMNNVSCVMFHAKQDIIVSNSEDKSIRIWDATKRTGIQT), 288–326 (REHDRFWILSAHPEMNLLAAGHDSGMIVFKLERERPAFS), 363–404 (SLNQ…AGRA), and 450–489 (PLPIATDAIYYAGTGNLLCKAEDRVTIFDLQQRLILGELQ). Residues 857–882 (NGGDGFDAEEGEANEEDGEEGGWDLE) are disordered. The segment covering 862–882 (FDAEEGEANEEDGEEGGWDLE) has biased composition (acidic residues).

In terms of assembly, oligomeric complex that consists of at least the alpha, beta, beta', gamma, delta, epsilon and zeta subunits.

It localises to the cytoplasm. Its subcellular location is the golgi apparatus membrane. It is found in the cytoplasmic vesicle. The protein resides in the COPI-coated vesicle membrane. Its function is as follows. The coatomer is a cytosolic protein complex that binds to dilysine motifs and reversibly associates with Golgi non-clathrin-coated vesicles, which further mediate biosynthetic protein transport from the ER, via the Golgi up to the trans Golgi network. Coatomer complex is required for budding from Golgi membranes, and is essential for the retrograde Golgi-to-ER transport of dilysine-tagged proteins. This is Coatomer subunit alpha-1 from Oryza sativa subsp. japonica (Rice).